A 328-amino-acid chain; its full sequence is GMP reductase (328 aa).

Cys-176 functions as the Thioimidate intermediate in the catalytic mechanism. 205 to 228 (IIADGGIRTHGDVAKSIRFGATMV) is an NADP(+) binding site.

Belongs to the IMPDH/GMPR family. GuaC type 2 subfamily.

The enzyme catalyses IMP + NH4(+) + NADP(+) = GMP + NADPH + 2 H(+). Functionally, catalyzes the irreversible NADPH-dependent deamination of GMP to IMP. It functions in the conversion of nucleobase, nucleoside and nucleotide derivatives of G to A nucleotides, and in maintaining the intracellular balance of A and G nucleotides. The protein is GMP reductase of Bacillus thuringiensis (strain Al Hakam).